Reading from the N-terminus, the 264-residue chain is Acyl-[acyl-carrier-protein]--UDP-N-acetylglucosamine O-acyltransferase (264 aa).

It belongs to the transferase hexapeptide repeat family. LpxA subfamily. As to quaternary structure, homotrimer.

The protein localises to the cytoplasm. The enzyme catalyses a (3R)-hydroxyacyl-[ACP] + UDP-N-acetyl-alpha-D-glucosamine = a UDP-3-O-[(3R)-3-hydroxyacyl]-N-acetyl-alpha-D-glucosamine + holo-[ACP]. The protein operates within glycolipid biosynthesis; lipid IV(A) biosynthesis; lipid IV(A) from (3R)-3-hydroxytetradecanoyl-[acyl-carrier-protein] and UDP-N-acetyl-alpha-D-glucosamine: step 1/6. In terms of biological role, involved in the biosynthesis of lipid A, a phosphorylated glycolipid that anchors the lipopolysaccharide to the outer membrane of the cell. The polypeptide is Acyl-[acyl-carrier-protein]--UDP-N-acetylglucosamine O-acyltransferase (Rickettsia felis (strain ATCC VR-1525 / URRWXCal2) (Rickettsia azadi)).